A 186-amino-acid chain; its full sequence is Ras-related protein rapA (186 aa).

12–19 (GSGGVGKS) provides a ligand contact to GTP. Residues 34 to 42 (YDPTIEDSY) carry the Effector region motif. GTP contacts are provided by residues 59 to 63 (DTAGT) and 118 to 121 (NKCD). Cys-183 carries the post-translational modification Cysteine methyl ester. Cys-183 carries S-geranylgeranyl cysteine lipidation. Positions 184–186 (ALL) are cleaved as a propeptide — removed in mature form.

Belongs to the small GTPase superfamily. Ras family. In terms of assembly, interacts with ralGDS (only when rapA is in its GTP-bound state). Interacts with the Rap guanine nucleotide exchange factor glfB.

The protein localises to the cell membrane. The catalysed reaction is GTP + H2O = GDP + phosphate + H(+). Its function is as follows. G protein of the Ras family that positively regulates phagocytosis and negatively regulates macropinocytosis. May be involved in the activation of guanylyl cyclase during the response to hyperosmotic conditions. Overexpressing cells generate alterations in cell shape and contractile responses. Involved in chemotaxis via regulation of the balance of Ras and Rap signaling at the leading edge of chemotaxing cells. This is Ras-related protein rapA (rapA) from Dictyostelium discoideum (Social amoeba).